Consider the following 913-residue polypeptide: Translation initiation factor IF-2 (913 aa).

The segment at 1–322 (MTDNNDDKTL…QEKFRRSQMQ (322 aa)) is disordered. A compositionally biased stretch (low complexity) spans 60–113 (VQPVVAAPKPAAPAPVAARPQAPQPRIHQPGGQQQRPGSSQSQQRSGSSAPQQR). Positions 131-180 (MEARRRALMEAQARDVVEAKQRAEDEARRKVEEEQRIAAEKMEAANRAAE) are enriched in basic and acidic residues. 3 stretches are compositionally biased toward low complexity: residues 181-195 (EAAAAKVAASQPAAE), 203-238 (ERPAAAAAPAPRTDARPQSAAAAPRSAPATPDAAAP), and 261-277 (PARGKVVAPAPAKPAAR). The tr-type G domain occupies 411–578 (SRPPVVTIMG…AILLQAEILD (168 aa)). The interval 420–427 (GHVDHGKT) is G1. 420 to 427 (GHVDHGKT) serves as a coordination point for GTP. Residues 445 to 449 (GITQH) are G2. The segment at 466–469 (DTPG) is G3. GTP-binding positions include 466–470 (DTPGH) and 520–523 (NKID). A G4 region spans residues 520-523 (NKID). A G5 region spans residues 556 to 558 (SAK).

This sequence belongs to the TRAFAC class translation factor GTPase superfamily. Classic translation factor GTPase family. IF-2 subfamily.

It is found in the cytoplasm. In terms of biological role, one of the essential components for the initiation of protein synthesis. Protects formylmethionyl-tRNA from spontaneous hydrolysis and promotes its binding to the 30S ribosomal subunits. Also involved in the hydrolysis of GTP during the formation of the 70S ribosomal complex. This Agrobacterium fabrum (strain C58 / ATCC 33970) (Agrobacterium tumefaciens (strain C58)) protein is Translation initiation factor IF-2.